The chain runs to 453 residues: Nuclear distribution protein PAC1 (453 aa).

Residues 19–51 (QKDELHKSILDYFKTNNLHESFATLMREANQEG) form the LisH domain. Positions 69–96 (TSVIRLQKKIMEMESRISQLQEELSAAP) form a coiled coil. 7 WD repeats span residues 120 to 161 (GHRL…RTLK), 162 to 201 (GHTK…KNIK), 205 to 244 (GHDH…CTKT), 247 to 286 (GHAE…TKVE), 314 to 355 (LDPN…KTLT), 356 to 395 (GHDN…CTRT), and 413 to 452 (IEAP…KIWT).

This sequence belongs to the WD repeat LIS1/nudF family. In terms of assembly, self-associates. Interacts with NDL1 and dynein.

The protein resides in the cytoplasm. Its subcellular location is the cytoskeleton. The protein localises to the spindle pole. Functionally, positively regulates the activity of the minus-end directed microtubule motor protein dynein. May enhance dynein-mediated microtubule sliding by targeting dynein to the microtubule plus end. Required for nuclear migration during vegetative growth as well as development. Required for localization of dynein to the mitotic spindle poles. Recruits additional proteins to the dynein complex at SPBs. Required for retrograde early endosome (EE) transport from the hyphal tip. This chain is Nuclear distribution protein PAC1, found in Mycosarcoma maydis (Corn smut fungus).